The sequence spans 82 residues: Small ribosomal subunit protein uS17 (82 aa).

The protein belongs to the universal ribosomal protein uS17 family. Part of the 30S ribosomal subunit.

Functionally, one of the primary rRNA binding proteins, it binds specifically to the 5'-end of 16S ribosomal RNA. This chain is Small ribosomal subunit protein uS17, found in Synechococcus elongatus (strain ATCC 33912 / PCC 7942 / FACHB-805) (Anacystis nidulans R2).